The following is a 486-amino-acid chain: Glutamate--tRNA ligase (486 aa).

Residues 11–21 (PSPTGLLHIGN) carry the 'HIGH' region motif. The short motif at 255-259 (KLSKR) is the 'KMSKS' region element. Residue K258 coordinates ATP.

Belongs to the class-I aminoacyl-tRNA synthetase family. Glutamate--tRNA ligase type 1 subfamily. Monomer.

Its subcellular location is the cytoplasm. The enzyme catalyses tRNA(Glu) + L-glutamate + ATP = L-glutamyl-tRNA(Glu) + AMP + diphosphate. In terms of biological role, catalyzes the attachment of glutamate to tRNA(Glu) in a two-step reaction: glutamate is first activated by ATP to form Glu-AMP and then transferred to the acceptor end of tRNA(Glu). In Streptococcus pneumoniae (strain ATCC BAA-255 / R6), this protein is Glutamate--tRNA ligase.